The primary structure comprises 673 residues: Pesticin receptor (673 aa).

A signal peptide spans Met1 to Ala22. A TonB box motif is present at residues Ser30–Ser37. In terms of domain architecture, TBDR plug spans Ser41 to Gln155. A TBDR beta-barrel domain is found at Thr160–Phe672. The short motif at Gln657 to Phe673 is the TonB C-terminal box element.

Belongs to the TonB-dependent receptor family.

The protein resides in the cell outer membrane. Its function is as follows. Receptor for the bacteriocin pesticin and for the siderophore yersiniabactin. The sequence is that of Pesticin receptor (fyuA) from Yersinia enterocolitica.